The chain runs to 166 residues: uncharacterized protein (166 aa).

The segment covering Ser-73–Ala-88 has biased composition (low complexity). Disordered stretches follow at residues Ser-73–Lys-101 and Pro-126–Asn-166. Basic and acidic residues predominate over residues Val-89–Lys-101. Residues Ser-134–Pro-154 show a composition bias toward low complexity. Residues Thr-155 to Asn-166 are compositionally biased toward polar residues.

This is an uncharacterized protein from Dictyostelium discoideum (Social amoeba).